The sequence spans 496 residues: MPIFSTRVLTYLRCIFRLFIGLTLLLTLVGCDFYTPSSQLEQIRQRGEIRVGTIYGPTSYYQRDDTAQGFDYELAQSYADWLGVKLTIVPVYSTAELVELLRKGKLDLAAAAIVVTPERRQLFRFGPGFYQVSPKLVYRNGSPKPKDIGDLKGNIVVPAGSTGEDLLKELAKQYPNLKWSTNRDADVEELLKQVADGKIDYTVVQDTVLARTQRYYPELTEGMTLAKNQTVAWAMTKLPDDSLYASIIDFFGQRFMDGAIAKLDEKYFGHVQNFDFVDTRTFLQRAKSLLPKYQDLFKTHANVVDWRLLAAISYQESHWDPEARSYTGVRGMMMLTEPTAKAMGVNNRLHPEESIKGGARYLEQMMEKVPASVPDDEKVWFALTAYNIGYGHMMDARRLTKELGKNPDAWSDVKEVLPLLQQSRWHRKVRYGYARGGEARNYVNNVRQYYQSLLWLDNEQQKAHRREELDDDDSSEPPSAERPTVIAEVVKQITLR.

A signal peptide spans 1 to 31 (MPIFSTRVLTYLRCIFRLFIGLTLLLTLVGC). Residues 32 to 271 (DFYTPSSQLE…KLDEKYFGHV (240 aa)) form a non-LT domain region. Residues 273-496 (NFDFVDTRTF…AEVVKQITLR (224 aa)) are LT domain. The active site involves E316. The tract at residues 464 to 486 (HRREELDDDDSSEPPSAERPTVI) is disordered.

The protein in the N-terminal section; belongs to the bacterial solute-binding protein 3 family. In the C-terminal section; belongs to the transglycosylase Slt family.

The protein localises to the cell outer membrane. It carries out the reaction Exolytic cleavage of the (1-&gt;4)-beta-glycosidic linkage between N-acetylmuramic acid (MurNAc) and N-acetylglucosamine (GlcNAc) residues in peptidoglycan, from either the reducing or the non-reducing ends of the peptidoglycan chains, with concomitant formation of a 1,6-anhydrobond in the MurNAc residue.. Functionally, murein-degrading enzyme that degrades murein glycan strands and insoluble, high-molecular weight murein sacculi, with the concomitant formation of a 1,6-anhydromuramoyl product. Lytic transglycosylases (LTs) play an integral role in the metabolism of the peptidoglycan (PG) sacculus. Their lytic action creates space within the PG sacculus to allow for its expansion as well as for the insertion of various structures such as secretion systems and flagella. This is Membrane-bound lytic murein transglycosylase F from Aeromonas hydrophila subsp. hydrophila (strain ATCC 7966 / DSM 30187 / BCRC 13018 / CCUG 14551 / JCM 1027 / KCTC 2358 / NCIMB 9240 / NCTC 8049).